A 258-amino-acid polypeptide reads, in one-letter code: Acetylglutamate kinase (258 aa).

Substrate contacts are provided by residues G44–G45, R66, and N158. Residues D181–L186 and I209–T211 contribute to the ATP site.

Belongs to the acetylglutamate kinase family. ArgB subfamily. Homodimer.

The protein resides in the cytoplasm. The catalysed reaction is N-acetyl-L-glutamate + ATP = N-acetyl-L-glutamyl 5-phosphate + ADP. It participates in amino-acid biosynthesis; L-arginine biosynthesis; N(2)-acetyl-L-ornithine from L-glutamate: step 2/4. Functionally, catalyzes the ATP-dependent phosphorylation of N-acetyl-L-glutamate. This chain is Acetylglutamate kinase, found in Shigella dysenteriae serotype 1 (strain Sd197).